Consider the following 112-residue polypeptide: Putative pterin-4-alpha-carbinolamine dehydratase (112 aa).

It belongs to the pterin-4-alpha-carbinolamine dehydratase family.

It carries out the reaction (4aS,6R)-4a-hydroxy-L-erythro-5,6,7,8-tetrahydrobiopterin = (6R)-L-erythro-6,7-dihydrobiopterin + H2O. The protein is Putative pterin-4-alpha-carbinolamine dehydratase of Dechloromonas aromatica (strain RCB).